We begin with the raw amino-acid sequence, 699 residues long: Elongation factor G (699 aa).

One can recognise a tr-type G domain in the interval 8 to 288; it reads EDYRNFGIMA…AVVDYLPSPL (281 aa). GTP-binding positions include 17–24, 86–90, and 140–143; these read AHIDAGKT, DTPGH, and NKMD.

Belongs to the TRAFAC class translation factor GTPase superfamily. Classic translation factor GTPase family. EF-G/EF-2 subfamily.

It localises to the cytoplasm. Its function is as follows. Catalyzes the GTP-dependent ribosomal translocation step during translation elongation. During this step, the ribosome changes from the pre-translocational (PRE) to the post-translocational (POST) state as the newly formed A-site-bound peptidyl-tRNA and P-site-bound deacylated tRNA move to the P and E sites, respectively. Catalyzes the coordinated movement of the two tRNA molecules, the mRNA and conformational changes in the ribosome. This chain is Elongation factor G, found in Rhizobium etli (strain ATCC 51251 / DSM 11541 / JCM 21823 / NBRC 15573 / CFN 42).